Here is a 305-residue protein sequence, read N- to C-terminus: rRNA 2'-O-methyltransferase fibrillarin (305 aa).

A disordered region spans residues 1–70; sequence MAYTPGSRGG…SGGRGGAKGG (70 aa). Residues 7 to 69 are compositionally biased toward gly residues; the sequence is SRGGRGGSRG…SSGGRGGAKG (63 aa). Phosphoserine is present on residues Ser111 and Ser114. S-adenosyl-L-methionine is bound by residues 160–161, 179–180, 204–205, and 224–227; these read TS, EF, DA, and DVAQ.

The protein belongs to the methyltransferase superfamily. Fibrillarin family. In terms of assembly, component of box C/D small nucleolar ribonucleoprotein (snoRNP) particles. In terms of processing, by homology to other fibrillarins, some or all of the N-terminal domain arginines are modified to asymmetric dimethylarginine (DMA).

The protein resides in the nucleus. It localises to the nucleolus. It catalyses the reaction L-glutaminyl-[histone H2A] + S-adenosyl-L-methionine = N(5)-methyl-L-glutaminyl-[histone H2A] + S-adenosyl-L-homocysteine + H(+). Its function is as follows. S-adenosyl-L-methionine-dependent methyltransferase that has the ability to methylate both RNAs and proteins. Involved in pre-rRNA processing by catalyzing the site-specific 2'-hydroxyl methylation of ribose moieties in pre-ribosomal RNA. Site specificity is provided by a guide RNA that base pairs with the substrate. Methylation occurs at a characteristic distance from the sequence involved in base pairing with the guide RNA. Also acts as a protein methyltransferase by mediating methylation of 'Gln-105' of histone H2A (H2AQ105me), a modification that impairs binding of the FACT complex and is specifically present at 35S ribosomal DNA locus. In Schizosaccharomyces pombe (strain 972 / ATCC 24843) (Fission yeast), this protein is rRNA 2'-O-methyltransferase fibrillarin (fib1).